The sequence spans 173 residues: ATP-dependent protease subunit HslV (173 aa).

Residue threonine 2 is part of the active site. The Na(+) site is built by glycine 158, aspartate 161, and serine 164.

The protein belongs to the peptidase T1B family. HslV subfamily. In terms of assembly, a double ring-shaped homohexamer of HslV is capped on each side by a ring-shaped HslU homohexamer. The assembly of the HslU/HslV complex is dependent on binding of ATP.

The protein resides in the cytoplasm. The enzyme catalyses ATP-dependent cleavage of peptide bonds with broad specificity.. Allosterically activated by HslU binding. Its function is as follows. Protease subunit of a proteasome-like degradation complex believed to be a general protein degrading machinery. This Glaesserella parasuis serovar 5 (strain SH0165) (Haemophilus parasuis) protein is ATP-dependent protease subunit HslV.